The chain runs to 418 residues: Nucleoredoxin (418 aa).

Residues 109-309 (KYKVTSIPSL…ESNAVQLHEG (201 aa)) form the Thioredoxin domain.

The protein belongs to the nucleoredoxin family.

The protein resides in the cytoplasm. It is found in the cytosol. Its subcellular location is the nucleus. It catalyses the reaction [protein]-dithiol + NAD(+) = [protein]-disulfide + NADH + H(+). The catalysed reaction is [protein]-dithiol + NADP(+) = [protein]-disulfide + NADPH + H(+). In terms of biological role, functions as a redox-dependent negative regulator of the Wnt signaling pathway. In Danio rerio (Zebrafish), this protein is Nucleoredoxin (nxn).